A 137-amino-acid polypeptide reads, in one-letter code: Small ribosomal subunit protein uS12 (137 aa).

A disordered region spans residues 1 to 55; sequence MPTINQLVRKPRQSKSKKSDSPALNRNFNSKKKKFTDLNSPQKRGVCTRVGTMTP. Asp-102 is subject to 3-methylthioaspartic acid. Residues 118–137 form a disordered region; the sequence is SGVDGRRQGRSLYGTKKPKK.

The protein belongs to the universal ribosomal protein uS12 family. As to quaternary structure, part of the 30S ribosomal subunit. Contacts proteins S8 and S17. May interact with IF1 in the 30S initiation complex.

Its function is as follows. With S4 and S5 plays an important role in translational accuracy. Functionally, interacts with and stabilizes bases of the 16S rRNA that are involved in tRNA selection in the A site and with the mRNA backbone. Located at the interface of the 30S and 50S subunits, it traverses the body of the 30S subunit contacting proteins on the other side and probably holding the rRNA structure together. The combined cluster of proteins S8, S12 and S17 appears to hold together the shoulder and platform of the 30S subunit. This chain is Small ribosomal subunit protein uS12, found in Staphylococcus saprophyticus subsp. saprophyticus (strain ATCC 15305 / DSM 20229 / NCIMB 8711 / NCTC 7292 / S-41).